A 307-amino-acid chain; its full sequence is Cyclin-dependent kinase 5 activator 1 (307 aa).

G2 carries N-myristoyl glycine lipidation. Phosphoserine; by CDK5 is present on S8. Residues 97-135 form a disordered region; it reads TFAQPPPAQPPAPPASQLSGSQTGVSSSVKKAPHPAVSS. Residues 100-110 are compositionally biased toward pro residues; the sequence is QPPPAQPPAPP. Polar residues predominate over residues 112 to 125; the sequence is SQLSGSQTGVSSSV. T138 carries the phosphothreonine; by CDK5 modification.

The protein belongs to the cyclin-dependent kinase 5 activator family. As to quaternary structure, heterodimer composed of a catalytic subunit CDK5 and a regulatory subunit CDK5R1 (p25) and macromolecular complex composed of at least CDK5, CDK5R1 (p35) and CDK5RAP1 or CDK5RAP2 or CDK5RAP3. Only the heterodimer shows kinase activity. Interacts with EPHA4 and NGEF; may mediate the activation of NGEF by EPHA4. Interacts with RASGRF2. The complex p35/CDK5 interacts with CLOCK. The p35 form is proteolytically cleaved by calpain, giving rise to the p25 form. P35 has a 5 to 10 fold shorter half-life compared to p25. The conversion results in deregulation of the CDK5 kinase: p25/CDK5 kinase displays an increased and altered tau phosphorylation in comparison to the p35/CDK5 kinase in vivo. Post-translationally, myristoylated. A proper myristoylation signal is essential for the proper distribution of p35. In terms of processing, phosphorylation at Ser-8 and Thr-138 by CDK5 prevents calpain-mediated proteolysis. Ubiquitinated, leading to its degradation: degradation of p35 by proteasome results in down-regulation of CDK5 activity. During this process, CDK5 phosphorylates p35 and induces its ubiquitination and subsequent degradation. Ubiquitinated by the CRL2(FEM1B) complex, which recognizes the -Gly-Leu-Asp-Arg C-degron at the C-terminus, leading to its degradation. Brain and neuron specific.

The protein localises to the cell membrane. It localises to the cell projection. Its subcellular location is the neuron projection. The protein resides in the nucleus. It is found in the cytoplasm. The protein localises to the perinuclear region. It localises to the perikaryon. Functionally, p35 is a neuron specific activator of CDK5. The complex p35/CDK5 is required for neurite outgrowth and cortical lamination. Involved in dendritic spine morphogenesis by mediating the EFNA1-EPHA4 signaling. Activator of TPKII. The complex p35/CDK5 participates in the regulation of the circadian clock by modulating the function of CLOCK protein: phosphorylates CLOCK at 'Thr-451' and 'Thr-461' and regulates the transcriptional activity of the CLOCK-BMAL1 heterodimer in association with altered stability and subcellular distribution. This Bos taurus (Bovine) protein is Cyclin-dependent kinase 5 activator 1 (CDK5R1).